The primary structure comprises 89 residues: Small ribosomal subunit protein uS15 (89 aa).

It belongs to the universal ribosomal protein uS15 family. As to quaternary structure, part of the 30S ribosomal subunit. Forms a bridge to the 50S subunit in the 70S ribosome, contacting the 23S rRNA.

In terms of biological role, one of the primary rRNA binding proteins, it binds directly to 16S rRNA where it helps nucleate assembly of the platform of the 30S subunit by binding and bridging several RNA helices of the 16S rRNA. Forms an intersubunit bridge (bridge B4) with the 23S rRNA of the 50S subunit in the ribosome. This is Small ribosomal subunit protein uS15 from Cereibacter sphaeroides (strain ATCC 17025 / ATH 2.4.3) (Rhodobacter sphaeroides).